The following is a 193-amino-acid chain: dTTP/UTP pyrophosphatase (193 aa).

D71 functions as the Proton acceptor in the catalytic mechanism.

Belongs to the Maf family. YhdE subfamily. A divalent metal cation is required as a cofactor.

The protein resides in the cytoplasm. It catalyses the reaction dTTP + H2O = dTMP + diphosphate + H(+). The enzyme catalyses UTP + H2O = UMP + diphosphate + H(+). In terms of biological role, nucleoside triphosphate pyrophosphatase that hydrolyzes dTTP and UTP. May have a dual role in cell division arrest and in preventing the incorporation of modified nucleotides into cellular nucleic acids. The polypeptide is dTTP/UTP pyrophosphatase (Citrifermentans bemidjiense (strain ATCC BAA-1014 / DSM 16622 / JCM 12645 / Bem) (Geobacter bemidjiensis)).